A 344-amino-acid polypeptide reads, in one-letter code: L-rhamnose-proton symporter (344 aa).

The next 10 helical transmembrane spans lie at 4-24, 38-58, 68-88, 101-121, 137-157, 175-195, 214-234, 259-279, 290-310, and 323-343; these read AITMGIFWHLIGAASAACFYA, WSVGGIVSWIILPWTISALLL, FSLSTLLPVFLFGAMWGIGNI, MGIGIAIGITLIVGTLMTPII, TLLGVLVALIGVGIVTRAGQL, LVLAVMCGIFSAGMSFAMNAA, LPSYVVIMGGGAIINLGFCFI, VLLSALGGLMWYLQFFFYAWG, ISWMLHMSFYVLCGGIVGLVL, and VLSLGCVVIIVAANIVGIGMA.

This sequence belongs to the L-rhamnose transporter (TC 2.A.7.6) family.

Its subcellular location is the cell inner membrane. It carries out the reaction L-rhamnopyranose(in) + H(+)(in) = L-rhamnopyranose(out) + H(+)(out). In terms of biological role, uptake of L-rhamnose across the cytoplasmic membrane with the concomitant transport of protons into the cell (symport system). In Shigella sonnei (strain Ss046), this protein is L-rhamnose-proton symporter.